The chain runs to 269 residues: 4-hydroxy-tetrahydrodipicolinate reductase (269 aa).

NAD(+) is bound at residue 11–16; sequence GPIGRM. Lys39 is an NADP(+) binding site. Residues 101 to 103 and 125 to 128 contribute to the NAD(+) site; these read GTT and ASNF. His158 functions as the Proton donor/acceptor in the catalytic mechanism. A (S)-2,3,4,5-tetrahydrodipicolinate-binding site is contributed by His159. Lys162 serves as the catalytic Proton donor. 168-169 serves as a coordination point for (S)-2,3,4,5-tetrahydrodipicolinate; sequence GT.

This sequence belongs to the DapB family. Homotetramer.

It is found in the cytoplasm. It carries out the reaction (S)-2,3,4,5-tetrahydrodipicolinate + NAD(+) + H2O = (2S,4S)-4-hydroxy-2,3,4,5-tetrahydrodipicolinate + NADH + H(+). It catalyses the reaction (S)-2,3,4,5-tetrahydrodipicolinate + NADP(+) + H2O = (2S,4S)-4-hydroxy-2,3,4,5-tetrahydrodipicolinate + NADPH + H(+). It participates in amino-acid biosynthesis; L-lysine biosynthesis via DAP pathway; (S)-tetrahydrodipicolinate from L-aspartate: step 4/4. Functionally, catalyzes the conversion of 4-hydroxy-tetrahydrodipicolinate (HTPA) to tetrahydrodipicolinate. In Buchnera aphidicola subsp. Acyrthosiphon pisum (strain Tuc7), this protein is 4-hydroxy-tetrahydrodipicolinate reductase.